A 120-amino-acid polypeptide reads, in one-letter code: NAD(P)H-quinone oxidoreductase subunit 3 (120 aa).

3 helical membrane-spanning segments follow: residues 2 to 22 (FVLSGYEYFLGFLIVSSLVPI), 64 to 84 (MFALVFVVFDVETVFLYPWAV), and 89 to 109 (LGLLAFVEALIFIAILVIALV).

It belongs to the complex I subunit 3 family. As to quaternary structure, NDH-1 can be composed of about 15 different subunits; different subcomplexes with different compositions have been identified which probably have different functions.

The protein localises to the cellular thylakoid membrane. The enzyme catalyses a plastoquinone + NADH + (n+1) H(+)(in) = a plastoquinol + NAD(+) + n H(+)(out). The catalysed reaction is a plastoquinone + NADPH + (n+1) H(+)(in) = a plastoquinol + NADP(+) + n H(+)(out). Functionally, NDH-1 shuttles electrons from an unknown electron donor, via FMN and iron-sulfur (Fe-S) centers, to quinones in the respiratory and/or the photosynthetic chain. The immediate electron acceptor for the enzyme in this species is believed to be plastoquinone. Couples the redox reaction to proton translocation, and thus conserves the redox energy in a proton gradient. Cyanobacterial NDH-1 also plays a role in inorganic carbon-concentration. The polypeptide is NAD(P)H-quinone oxidoreductase subunit 3 (Picosynechococcus sp. (strain ATCC 27264 / PCC 7002 / PR-6) (Agmenellum quadruplicatum)).